We begin with the raw amino-acid sequence, 58 residues long: NADH dehydrogenase [ubiquinone] 1 beta subcomplex subunit 1 (58 aa).

A helical transmembrane segment spans residues 11–27; sequence HWVHVLVPMGFVIGCYL.

It belongs to the complex I NDUFB1 subunit family. In terms of assembly, complex I is composed of 45 different subunits.

It localises to the mitochondrion inner membrane. In terms of biological role, accessory subunit of the mitochondrial membrane respiratory chain NADH dehydrogenase (Complex I) that is believed not to be involved in catalysis. Complex I functions in the transfer of electrons from NADH to the respiratory chain. The immediate electron acceptor for the enzyme is believed to be ubiquinone. This Homo sapiens (Human) protein is NADH dehydrogenase [ubiquinone] 1 beta subcomplex subunit 1 (NDUFB1).